Consider the following 205-residue polypeptide: Holliday junction branch migration complex subunit RuvA (205 aa).

The segment at 1 to 64 is domain I; it reads MIGKLKGLID…EDQIKLFGFR (64 aa). Positions 65-143 are domain II; sequence SDLEREWFRL…AFASVDPAVV (79 aa). The tract at residues 144-153 is flexible linker; that stretch reads ALSGALDERS. Residues 153 to 205 are domain III; sequence SAPRPVTDAISALVNLGYGQPQAAAAIASASRSAGEGAETAQLIKLGLKELSK.

This sequence belongs to the RuvA family. As to quaternary structure, homotetramer. Forms an RuvA(8)-RuvB(12)-Holliday junction (HJ) complex. HJ DNA is sandwiched between 2 RuvA tetramers; dsDNA enters through RuvA and exits via RuvB. An RuvB hexamer assembles on each DNA strand where it exits the tetramer. Each RuvB hexamer is contacted by two RuvA subunits (via domain III) on 2 adjacent RuvB subunits; this complex drives branch migration. In the full resolvosome a probable DNA-RuvA(4)-RuvB(12)-RuvC(2) complex forms which resolves the HJ.

The protein resides in the cytoplasm. In terms of biological role, the RuvA-RuvB-RuvC complex processes Holliday junction (HJ) DNA during genetic recombination and DNA repair, while the RuvA-RuvB complex plays an important role in the rescue of blocked DNA replication forks via replication fork reversal (RFR). RuvA specifically binds to HJ cruciform DNA, conferring on it an open structure. The RuvB hexamer acts as an ATP-dependent pump, pulling dsDNA into and through the RuvAB complex. HJ branch migration allows RuvC to scan DNA until it finds its consensus sequence, where it cleaves and resolves the cruciform DNA. This chain is Holliday junction branch migration complex subunit RuvA, found in Rhodopseudomonas palustris (strain BisB18).